A 73-amino-acid polypeptide reads, in one-letter code: Putative antitoxin VapB16 (73 aa).

Belongs to the UPF0330 family.

Its function is as follows. Possibly the antitoxin component of a type II toxin-antitoxin (TA) system. Its cognate toxin is VapC16 (Potential). The chain is Putative antitoxin VapB16 (vapB16) from Archaeoglobus fulgidus (strain ATCC 49558 / DSM 4304 / JCM 9628 / NBRC 100126 / VC-16).